Consider the following 378-residue polypeptide: Ribosomal RNA large subunit methyltransferase G (378 aa).

The protein belongs to the methyltransferase superfamily. RlmG family.

It is found in the cytoplasm. The enzyme catalyses guanosine(1835) in 23S rRNA + S-adenosyl-L-methionine = N(2)-methylguanosine(1835) in 23S rRNA + S-adenosyl-L-homocysteine + H(+). In terms of biological role, specifically methylates the guanine in position 1835 (m2G1835) of 23S rRNA. This Salmonella paratyphi B (strain ATCC BAA-1250 / SPB7) protein is Ribosomal RNA large subunit methyltransferase G.